Consider the following 303-residue polypeptide: Ornithine carbamoyltransferase (303 aa).

Carbamoyl phosphate-binding positions include serine 53–threonine 56, glutamine 80, arginine 104, and histidine 131–glutamine 134. L-ornithine is bound by residues asparagine 162, aspartate 222, and serine 226–methionine 227. Residues cysteine 261–leucine 262 and arginine 289 contribute to the carbamoyl phosphate site.

It belongs to the aspartate/ornithine carbamoyltransferase superfamily. OTCase family.

It is found in the cytoplasm. It catalyses the reaction carbamoyl phosphate + L-ornithine = L-citrulline + phosphate + H(+). Its pathway is amino-acid biosynthesis; L-arginine biosynthesis; L-arginine from L-ornithine and carbamoyl phosphate: step 1/3. Reversibly catalyzes the transfer of the carbamoyl group from carbamoyl phosphate (CP) to the N(epsilon) atom of ornithine (ORN) to produce L-citrulline. This chain is Ornithine carbamoyltransferase, found in Mesorhizobium japonicum (strain LMG 29417 / CECT 9101 / MAFF 303099) (Mesorhizobium loti (strain MAFF 303099)).